Here is a 1265-residue protein sequence, read N- to C-terminus: 1-phosphatidylinositol 4,5-bisphosphate phosphodiesterase gamma-2 (1265 aa).

The PH domain occupies 20 to 131; the sequence is RALELGTVMT…WLSGLKILHQ (112 aa). Positions 312 to 456 constitute a PI-PLC X-box domain; sequence QDMNNPLSHY…LREKIIIKHK (145 aa). Residues histidine 327 and histidine 372 contribute to the active site. SH2 domains lie at 532–635 and 646–735; these read WFHK…TDPV and WYYD…RYPV. 2 positions are modified to phosphotyrosine; by BTK: tyrosine 753 and tyrosine 759. Residues 769–829 enclose the SH3 domain; sequence MPQRTVKALY…PSNYVEDISA (61 aa). The PI-PLC Y-box domain maps to 930–1044; the sequence is LSDLVVYCKP…GYVLQPESMR (115 aa). The C2 domain maps to 1038-1169; it reads LQPESMRSEK…SGFRSVPLKN (132 aa). Phosphotyrosine; by BTK is present on tyrosine 1197. Phosphotyrosine occurs at positions 1217 and 1245.

As to quaternary structure, part of a complex composed of EEIG1, TNFRSF11A/RANK, PLCG2, GAB2, TEC and BTK; complex formation increases in the presence of TNFSF11/RANKL. Interacts (via SH2 domain) with CSF1R (tyrosine phosphorylated). Interacts constitutively with THEMIS2. It depends on Ca(2+) as a cofactor. Post-translationally, phosphorylated on tyrosine residues by CSF1R. Phosphorylated on tyrosine residues by BTK and SYK; upon ligand-induced activation of a variety of growth factor receptors and immune system receptors. Phosphorylation leads to increased phospholipase activity.

It is found in the membrane raft. The catalysed reaction is a 1,2-diacyl-sn-glycero-3-phospho-(1D-myo-inositol-4,5-bisphosphate) + H2O = 1D-myo-inositol 1,4,5-trisphosphate + a 1,2-diacyl-sn-glycerol + H(+). Its function is as follows. The production of the second messenger molecules diacylglycerol (DAG) and inositol 1,4,5-trisphosphate (IP3) is mediated by activated phosphatidylinositol-specific phospholipase C enzymes. It is a crucial enzyme in transmembrane signaling. This chain is 1-phosphatidylinositol 4,5-bisphosphate phosphodiesterase gamma-2, found in Rattus norvegicus (Rat).